The chain runs to 409 residues: MVLTPRQKEELNKAIADYLHQCGFEDTLNAFKQDANMPGELDKKYTGLLEKKWTSVIRLQKKVMDLETRLSEAEKEVHHGGGPKKTRSPEDWIPRPPERYTLTGHRSPITKVLFHPVYSVMVTSSEDATVKVWDYETGDFERTLKGHTDAVQDLAFDHTGKFLASSSADMTIKLWDFQGFECIRTLHGHDHNVSSISFLPSGDHLVSASRDKTIKMWEIATGYCVKTFQGHGEWVRRVRPNADGSLIASCSNDQTIRVWVVASRECKCDLRDHDHVIEDLNWAPESATPVINEAAGVEGGKKAMSPGPFLVSASRDKSIKIWDVSAGVCLVTLVGHDNWVRAVMFHPGGKFIVSCSDDKTLRIWDYKNKRCAKTLVAHEHFVTTLDFHKSAPFVATGSVDLTLKVWECR.

A LisH domain is found at 7–39 (QKEELNKAIADYLHQCGFEDTLNAFKQDANMPG). A coiled-coil region spans residues 54-80 (TSVIRLQKKVMDLETRLSEAEKEVHHG). A disordered region spans residues 72-95 (EAEKEVHHGGGPKKTRSPEDWIPR). WD repeat units lie at residues 104-145 (GHRS…RTLK), 146-187 (GHTD…RTLH), 188-229 (GHDH…KTFQ), 231-269 (HGEWVRRVRPNADGSLIASCSNDQTIRVWVVASRECKCD), 272-332 (DHDH…CLVT), 335-374 (GHDNWVRAVMFHPGGKFIVSCSDDKTLRIWDYKNKRCAKT), and 377-409 (AHEHFVTTLDFHKSAPFVATGSVDLTLKVWECR).

Belongs to the WD repeat LIS1/nudF family.

Its subcellular location is the cytoplasm. The protein resides in the cytoskeleton. It is found in the microtubule organizing center. It localises to the centrosome. Positively regulates the activity of the minus-end directed microtubule motor protein dynein. May enhance dynein-mediated microtubule sliding by targeting dynein to the microtubule plus end. Required for several dynein- and microtubule-dependent processes. The polypeptide is Lissencephaly-1 homolog (Nematostella vectensis (Starlet sea anemone)).